The sequence spans 164 residues: SsrA-binding protein (164 aa).

The protein belongs to the SmpB family.

It is found in the cytoplasm. Required for rescue of stalled ribosomes mediated by trans-translation. Binds to transfer-messenger RNA (tmRNA), required for stable association of tmRNA with ribosomes. tmRNA and SmpB together mimic tRNA shape, replacing the anticodon stem-loop with SmpB. tmRNA is encoded by the ssrA gene; the 2 termini fold to resemble tRNA(Ala) and it encodes a 'tag peptide', a short internal open reading frame. During trans-translation Ala-aminoacylated tmRNA acts like a tRNA, entering the A-site of stalled ribosomes, displacing the stalled mRNA. The ribosome then switches to translate the ORF on the tmRNA; the nascent peptide is terminated with the 'tag peptide' encoded by the tmRNA and targeted for degradation. The ribosome is freed to recommence translation, which seems to be the essential function of trans-translation. This Corynebacterium glutamicum (strain R) protein is SsrA-binding protein.